Here is a 593-residue protein sequence, read N- to C-terminus: RNA-binding protein 47 (593 aa).

A compositionally biased stretch (low complexity) spans 1–20 (MTAEDSTAAMSSDSAAGSSA). The segment at 1–25 (MTAEDSTAAMSSDSAAGSSAKVPEG) is disordered. 3 consecutive RRM domains span residues 71 to 149 (CEVF…CSVD), 151 to 233 (CRLF…WAEP), and 246 to 318 (KILY…LAKP). Arg332 carries the omega-N-methylarginine modification. 2 positions are modified to asymmetric dimethylarginine; alternate: Arg394 and Arg405. Omega-N-methylarginine; alternate is present on residues Arg394 and Arg405.

The protein belongs to the RRM RBM47 family. As to quaternary structure, homodimer. Interacts with A1CF. Interacts with APOBEC1; form an mRNA editing complex. Interacts with RBPMS.

Its subcellular location is the nucleus. It is found in the cytoplasm. Its function is as follows. Single-stranded RNA-binding protein that functions in a variety of RNA processes, including alternative splicing, RNA stabilization, and RNA editing. Functions as an enzyme-substrate adapter for the cytidine deaminase APOBEC1. With APOBEC1 forms an mRNA editing complex involved into cytidine to uridine editing of a variety of mRNA molecules. Through the binding of their 3'UTR, also stabilizes a variety of mRNAs and regulates the expression of genes such as the interferon alpha/beta receptor and interleukin-10. Also involved in the alternative splicing of several genes including TJP1. Binds the pre-mRNA (U)GCAUG consensus sequences in downstream intronic regions of alternative exons, regulating their exclusion and inclusion into mRNAs. Independently of its RNA-binding activity, could negatively regulate MAVS by promoting its lysosomal degradation. The chain is RNA-binding protein 47 from Homo sapiens (Human).